The chain runs to 245 residues: MTETKEERVHQVFEKIYKRYDVMNSVISFQRHKAWRKDTMKRMNVQEGQSALDVCCGTADWAIALGKAVGPTGHVEGLDFSENMLSIGKKKIADERLDHVFLRHGNAMELPYADDTFDFVTIGFGLRNVPDYMQVLREMARVTKPGGKVVCLETSQPTIPVFKQLYFFYFRHVMPLFGKMFAKSYDEYSWLQESTLSFPGRDRLAQMFKEVGLTDVQVKPYSGGAAAMHLGVKESYDEESRNVTC.

Residues Thr-58, Asp-79, and Asn-106 to Ala-107 each bind S-adenosyl-L-methionine.

This sequence belongs to the class I-like SAM-binding methyltransferase superfamily. MenG/UbiE family.

It catalyses the reaction a 2-demethylmenaquinol + S-adenosyl-L-methionine = a menaquinol + S-adenosyl-L-homocysteine + H(+). The protein operates within quinol/quinone metabolism; menaquinone biosynthesis; menaquinol from 1,4-dihydroxy-2-naphthoate: step 2/2. Methyltransferase required for the conversion of demethylmenaquinol (DMKH2) to menaquinol (MKH2). The chain is Demethylmenaquinone methyltransferase from Halalkalibacterium halodurans (strain ATCC BAA-125 / DSM 18197 / FERM 7344 / JCM 9153 / C-125) (Bacillus halodurans).